A 516-amino-acid chain; its full sequence is Katanin p60 ATPase-containing subunit A1 (516 aa).

The tract at residues 75–212 (GFKSEPAAPE…DEKKFDPAGY (138 aa)) is disordered. Composition is skewed to basic and acidic residues over residues 133-143 (ARKDPPRRSEP) and 155-167 (RGGRGPSDRRGDA). Residues 168–178 (RSGGGGRGGAR) show a composition bias toward gly residues. Over residues 179–212 (GSDKDKNRGGKSDKDKKAPSGEEGDEKKFDPAGY) the composition is skewed to basic and acidic residues. 274-281 (GPPGTGKT) serves as a coordination point for ATP.

Belongs to the AAA ATPase family. Katanin p60 subunit A1 subfamily. In terms of assembly, can homooligomerize into hexameric rings, which may be promoted by interaction with microtubules. Interacts with KATNB1, which may serve as a targeting subunit.

It localises to the cytoplasm. The protein resides in the cytoskeleton. Its subcellular location is the microtubule organizing center. The protein localises to the centrosome. It is found in the spindle pole. It carries out the reaction n ATP + n H2O + a microtubule = n ADP + n phosphate + (n+1) alpha/beta tubulin heterodimers.. Its activity is regulated as follows. ATPase activity is stimulated by microtubules, which promote homooligomerization. ATP-dependent microtubule severing is stimulated by interaction with KATNB1. In terms of biological role, catalytic subunit of a complex which severs microtubules in an ATP-dependent manner. Microtubule severing may promote rapid reorganization of cellular microtubule arrays and the release of microtubules from the centrosome following nucleation. In mitotic spindles this could allow depolymerization of the microtubule end proximal to the centrosome, and subsequent poleward microtubule flux. The polypeptide is Katanin p60 ATPase-containing subunit A1 (Strongylocentrotus purpuratus (Purple sea urchin)).